Consider the following 125-residue polypeptide: Snaclec botrocetin subunit beta (125 aa).

3 disulfide bridges follow: cysteine 2-cysteine 13, cysteine 30-cysteine 121, and cysteine 98-cysteine 113. The 114-residue stretch at 9–122 (YEGHCYRFFK…CTRFKNFVCE (114 aa)) folds into the C-type lectin domain.

It belongs to the snaclec family. Heterodimer of subunits alpha and beta; disulfide-linked. Botrocetin and vWF form a soluble complex. In terms of tissue distribution, expressed by the venom gland.

Its subcellular location is the secreted. Functionally, snaclec that binds to von Willebrand factor (VWF) and induces its interaction with GPIbalpha (GP1BA) (via the vWF A1 domain), resulting in platelet aggregation. This Bothrops jararaca (Jararaca) protein is Snaclec botrocetin subunit beta.